A 337-amino-acid polypeptide reads, in one-letter code: 2-oxoglutarate receptor 1 (337 aa).

The Extracellular segment spans residues methionine 1 to proline 37. N-linked (GlcNAc...) asparagine glycosylation occurs at asparagine 23. The helical transmembrane segment at valine 38–tyrosine 58 threads the bilayer. Residues valine 59–threonine 69 are Cytoplasmic-facing. The chain crosses the membrane as a helical span at residues isoleucine 70–isoleucine 90. The Extracellular segment spans residues histidine 91–asparagine 116. Cysteines 106 and 183 form a disulfide. Residues leucine 117 to histidine 137 traverse the membrane as a helical segment. At proline 138 to valine 151 the chain is on the cytoplasmic side. A helical membrane pass occupies residues valine 152–isoleucine 172. Over threonine 173 to leucine 200 the chain is Extracellular. A helical transmembrane segment spans residues isoleucine 201–isoleucine 221. At isoleucine 222 to leucine 242 the chain is on the cytoplasmic side. The chain crosses the membrane as a helical span at residues threonine 243–isoleucine 263. The Extracellular portion of the chain corresponds to arginine 264 to tyrosine 284. The chain crosses the membrane as a helical span at residues isoleucine 285 to valine 305. The Cytoplasmic segment spans residues serine 306–proline 337.

Belongs to the G-protein coupled receptor 1 family. In terms of tissue distribution, highly expressed in mast cells and is found predominantly in the tissues of the respiratory tract and kidneys.

It localises to the cell membrane. In terms of biological role, g protein-coupled receptor for dicarboxylates and amino dicarboxylates. Receptor for itaconate, a metabolite produced by myeloid lineages. In the respiratory epithelium, couples the binding of itaconate to the activation of GNA11 and downstream intracellular Ca(2+) release, leading to mucocilliary clearance of airborne pathogens. Receptor for leukotriene E4 (LTE4) produced by mast cells upon allergic inflammation. Binds with high affinity to LTE4 and elicits mucin release from pulmonary epithelium in response to airborne fungi allergens. Regulates mucin-producing goblet cell homeostasis. Receptor for alpha-ketoglutarate produced by proximal tubule renal cells upon metabolic alkalosis. In an intrarenal paracrine signaling pathway, binds alpha-ketoglutarate and drives transepithelial salt reabsorption and bicarbonate secretion by SLC26A4/pendrin-positive intercalated cells. In Rattus norvegicus (Rat), this protein is 2-oxoglutarate receptor 1 (Oxgr1).